Reading from the N-terminus, the 362-residue chain is Histidine protein methyltransferase 1 homolog (362 aa).

A disordered region spans residues 18 to 88 (TSLDDGTCVL…EACKHQPSWK (71 aa)). A compositionally biased stretch (basic and acidic residues) spans 30–51 (QKGKQDKRQSTERPGLPRDHSW). Residues 52–65 (KCSSLGNAASSEDT) show a composition bias toward polar residues. Ser62 and Ser67 each carry phosphoserine. Over residues 73–82 (DRSDDPEACK) the composition is skewed to basic and acidic residues. Tele-methylhistidine is present on His144. Residues 158–162 (IWECT), Gly185, and 206–208 (QDY) contribute to the S-adenosyl-L-methionine site. The Nuclear localization signal motif lies at 237-243 (PDGKRQR). Residues 259-261 (GEW) and Ser283 each bind S-adenosyl-L-methionine.

Belongs to the methyltransferase superfamily. METTL18 family. Interacts with GRWD1 and members of the heat shock protein 90 and 70 families; these proteins may possibly be methylation substrates for the enzyme. In terms of processing, monomethylated at His-144 through automethylation. Automethylation at His-144 positively regulates the methyltransferase activity toward RPL3. Probably methylated on other residues.

Its subcellular location is the cytoplasm. It localises to the cytosol. It is found in the nucleus. The protein localises to the nucleolus. It catalyses the reaction L-histidyl-[protein] + S-adenosyl-L-methionine = N(tele)-methyl-L-histidyl-[protein] + S-adenosyl-L-homocysteine + H(+). Its function is as follows. Protein-L-histidine N-tele-methyltransferase that specifically monomethylates RPL3, thereby regulating translation elongation. Histidine methylation of RPL3 regulates translation elongation by slowing ribosome traversal on tyrosine codons: slower elongation provides enough time for proper folding of synthesized proteins and prevents cellular aggregation of tyrosine-rich proteins. The chain is Histidine protein methyltransferase 1 homolog from Mus musculus (Mouse).